Here is a 452-residue protein sequence, read N- to C-terminus: Zinc finger protein 277 (452 aa).

The C2H2-type 1 zinc-finger motif lies at 200 to 224 (LMCLYCEKIFRDRPTLKEHMRKKGH). The interval 248 to 271 (APTPRKQHLQKRRRETASVSTVAD) is disordered. The segment covering 252–261 (RKQHLQKRRR) has biased composition (basic residues). Residues 361–385 (LRCVTCDLQFDEEELLVEHMAQESH) form a C2H2-type 2 zinc finger.

It belongs to the ZNF277 family. As to quaternary structure, interacts with components of the origin recognition complex (ORC) complex, Orc2 and Orc3, components of the SAGA transcription coactivator-HAT complex, Gcn5 and e(y)2, components of the mRNP biogenesis THO complex, thoc5 and e(y)2, and a component of the TFIID complex, TBP. Also interacts with polybromo, a component of the chromatin remodeling SWI/SNF complex.

The protein resides in the nucleus. Its subcellular location is the cytoplasm. Its function is as follows. DNA binding protein which is involved in the positive regulation of both basal and inducible transcription. Mainly localizes to active promoter sites and interacts with components of various transcription and replication regulatory complexes, such as the ORC, SAGA, THO, TFIID and SWI/SNF complexes. It may therefore regulate transcription by promoting the association of these complexes to their binding sites. This chain is Zinc finger protein 277, found in Drosophila melanogaster (Fruit fly).